The primary structure comprises 572 residues: Asparagine--tRNA ligase, cytoplasmic 1 (572 aa).

Alanine 2 is subject to N-acetylalanine. Positions 53 to 131 (VRIGGWVKSG…QQIELNVVKV (79 aa)) form a DNA-binding region, OB. Positions 236–292 (DVEAARLIVIERGNVVAELKAAKASKEAITAAVAELKIAKETFAHIDERSRLRPGLP) constitute a WHEP-TRS domain.

It belongs to the class-II aminoacyl-tRNA synthetase family.

The protein localises to the cytoplasm. It is found in the cytosol. It catalyses the reaction tRNA(Asn) + L-asparagine + ATP = L-asparaginyl-tRNA(Asn) + AMP + diphosphate + H(+). This chain is Asparagine--tRNA ligase, cytoplasmic 1, found in Arabidopsis thaliana (Mouse-ear cress).